Reading from the N-terminus, the 71-residue chain is Small ribosomal subunit protein bS21 (71 aa).

Positions 50 to 59 are enriched in basic residues; that stretch reads AAAVKRHAKK. Positions 50–71 are disordered; sequence AAAVKRHAKKVQREQRRAVRLY. Basic and acidic residues predominate over residues 60–71; that stretch reads VQREQRRAVRLY.

The protein belongs to the bacterial ribosomal protein bS21 family.

This chain is Small ribosomal subunit protein bS21, found in Pseudomonas fluorescens (strain ATCC BAA-477 / NRRL B-23932 / Pf-5).